Here is a 609-residue protein sequence, read N- to C-terminus: Protein KINESIN LIGHT CHAIN-RELATED 1 (609 aa).

A disordered region spans residues 1–77; sequence MPAMPGLVSV…TAAVIDVDDP (77 aa). Over residues 38–55 the composition is skewed to low complexity; the sequence is KKTPSSTPSRSKPSPNRS. 10 TPR repeats span residues 140–173, 183–216, 225–258, 267–301, 307–340, 349–382, 392–425, 433–466, 474–507, and 516–549; these read AMSL…PDPT, FSGH…QIQT, GETC…HRAH, AADR…IASG, ASID…FKAS, ASVF…YNKP, AGGL…LEDK, AGLE…LRAA, GVVL…LEQE, and LGVY…REEK. The interval 582–609 is disordered; the sequence is LQNLIDPNARPPKKESSAKKWPSLGFKF.

It belongs to the kinesin light chain family. Interacts with IQD1.

The protein resides in the cytoplasm. The protein localises to the cytoskeleton. The protein is Protein KINESIN LIGHT CHAIN-RELATED 1 of Arabidopsis thaliana (Mouse-ear cress).